Reading from the N-terminus, the 199-residue chain is Probable GTP-binding protein EngB (199 aa).

The 172-residue stretch at 28–199 (DLPEIALAGR…ESWDTILEYL (172 aa)) folds into the EngB-type G domain. Residues 36-43 (GRSNVGKS), 63-67 (GKTQL), 81-84 (DVPG), 148-151 (TKAD), and 180-182 (FSS) contribute to the GTP site. Positions 43 and 65 each coordinate Mg(2+).

Belongs to the TRAFAC class TrmE-Era-EngA-EngB-Septin-like GTPase superfamily. EngB GTPase family. It depends on Mg(2+) as a cofactor.

Functionally, necessary for normal cell division and for the maintenance of normal septation. This chain is Probable GTP-binding protein EngB, found in Streptococcus equi subsp. equi (strain 4047).